Consider the following 240-residue polypeptide: Citrate synthase-lysine N-methyltransferase CSKMT, mitochondrial (240 aa).

The transit peptide at 1–21 (MAALRRMLHLPRLTMGTCRPF) directs the protein to the mitochondrion.

Belongs to the methyltransferase superfamily.

The protein resides in the mitochondrion. The enzyme catalyses L-lysyl-[citrate synthase] + S-adenosyl-L-methionine = N(6)-methyl-L-lysyl-[citrate synthase] + S-adenosyl-L-homocysteine + H(+). It catalyses the reaction N(6)-methyl-L-lysyl-[citrate synthase] + S-adenosyl-L-methionine = N(6),N(6)-dimethyl-L-lysyl-[citrate synthase] + S-adenosyl-L-homocysteine + H(+). It carries out the reaction N(6),N(6)-dimethyl-L-lysyl-[citrate synthase] + S-adenosyl-L-methionine = N(6),N(6),N(6)-trimethyl-L-lysyl-[citrate synthase] + S-adenosyl-L-homocysteine + H(+). Its activity is regulated as follows. Citrate synthase-lysine methyltransferase activity is inhibited by S-adenosylhomocysteine (AdoHcy) and oxaloacetate (OAA). Functionally, protein-lysine methyltransferase that selectively trimethylates citrate synthase (CS) in mitochondria. Seems to conduct trimethylation in a highly distributive manner rather than in a processive manner, and thus introduces a single methyl group per binding event. The polypeptide is Citrate synthase-lysine N-methyltransferase CSKMT, mitochondrial (Pongo abelii (Sumatran orangutan)).